We begin with the raw amino-acid sequence, 283 residues long: Elongation factor Ts (283 aa).

Positions 79 to 82 (TDFV) are involved in Mg(2+) ion dislocation from EF-Tu.

The protein belongs to the EF-Ts family.

Its subcellular location is the cytoplasm. Associates with the EF-Tu.GDP complex and induces the exchange of GDP to GTP. It remains bound to the aminoacyl-tRNA.EF-Tu.GTP complex up to the GTP hydrolysis stage on the ribosome. This is Elongation factor Ts from Shewanella amazonensis (strain ATCC BAA-1098 / SB2B).